A 540-amino-acid polypeptide reads, in one-letter code: Chaperonin GroEL (540 aa).

ATP is bound by residues 29–32 (TLGP), 86–90 (DGTTT), Gly413, 478–480 (DAL), and Asp494.

The protein belongs to the chaperonin (HSP60) family. In terms of assembly, forms a cylinder of 14 subunits composed of two heptameric rings stacked back-to-back. Interacts with the co-chaperonin GroES.

It is found in the cytoplasm. It carries out the reaction ATP + H2O + a folded polypeptide = ADP + phosphate + an unfolded polypeptide.. Its function is as follows. Together with its co-chaperonin GroES, plays an essential role in assisting protein folding. The GroEL-GroES system forms a nano-cage that allows encapsulation of the non-native substrate proteins and provides a physical environment optimized to promote and accelerate protein folding. The protein is Chaperonin GroEL of Clostridioides difficile (Peptoclostridium difficile).